The following is a 325-amino-acid chain: GMP reductase (325 aa).

The Thioimidate intermediate role is filled by C173. An NADP(+)-binding site is contributed by 202–225 (IIADGGIRSHGDIAKSIRFGATMV).

The protein belongs to the IMPDH/GMPR family. GuaC type 2 subfamily.

It carries out the reaction IMP + NH4(+) + NADP(+) = GMP + NADPH + 2 H(+). Functionally, catalyzes the irreversible NADPH-dependent deamination of GMP to IMP. It functions in the conversion of nucleobase, nucleoside and nucleotide derivatives of G to A nucleotides, and in maintaining the intracellular balance of A and G nucleotides. This is GMP reductase from Paracidovorax citrulli (strain AAC00-1) (Acidovorax citrulli).